Consider the following 1396-residue polypeptide: DNA-directed RNA polymerase subunit beta' (1396 aa).

Zn(2+) contacts are provided by C72, C74, C87, and C90. Positions 463, 465, and 467 each coordinate Mg(2+). C814, C889, C896, and C899 together coordinate Zn(2+).

It belongs to the RNA polymerase beta' chain family. The RNAP catalytic core consists of 2 alpha, 1 beta, 1 beta' and 1 omega subunit. When a sigma factor is associated with the core the holoenzyme is formed, which can initiate transcription. Requires Mg(2+) as cofactor. Zn(2+) serves as cofactor.

The enzyme catalyses RNA(n) + a ribonucleoside 5'-triphosphate = RNA(n+1) + diphosphate. Its function is as follows. DNA-dependent RNA polymerase catalyzes the transcription of DNA into RNA using the four ribonucleoside triphosphates as substrates. The protein is DNA-directed RNA polymerase subunit beta' of Chlamydia trachomatis serovar L2b (strain UCH-1/proctitis).